The following is a 935-amino-acid chain: Phosphoenolpyruvate carboxylase (935 aa).

Residues H161 and K593 contribute to the active site.

This sequence belongs to the PEPCase type 1 family. It depends on Mg(2+) as a cofactor.

It carries out the reaction oxaloacetate + phosphate = phosphoenolpyruvate + hydrogencarbonate. In terms of biological role, forms oxaloacetate, a four-carbon dicarboxylic acid source for the tricarboxylic acid cycle. This is Phosphoenolpyruvate carboxylase from Mycolicibacterium paratuberculosis (strain ATCC BAA-968 / K-10) (Mycobacterium paratuberculosis).